The sequence spans 737 residues: Autolysin (737 aa).

A compositionally biased stretch (basic and acidic residues) spans 1-13; it reads MKKESMSRIERRK. Disordered regions lie at residues 1–28, 51–132, and 335–360; these read MKKE…KKST, AEAT…TDSS, and PSSG…SGTN. Residues 1-53 form the signal peptide; it reads MKKESMSRIERRKAQQRKKTPVQWKKSTTLFSSALIVSSVGTPVALLPVTAEA. A compositionally biased stretch (low complexity) spans 67–117; it reads PTTETGLVETPTTETTPGTTEQPTTDSSTTTESTTESSKETPTTPSTEQPT. Residues 118–132 are compositionally biased toward polar residues; the sequence is ADSTTPVESGTTDSS. Positions 339–352 are enriched in gly residues; the sequence is GNTGGGTVNPGTGG. In terms of domain architecture, LysM 1 spans 361 to 404; it reads TYYTVKSGDTLNKIAAQYGVSVANLRSWNGISGDLIFVGQKLIV. Positions 409–429 are disordered; the sequence is SGNTGGSGSGGSNNNQSGTNT. Over residues 410–419 the composition is skewed to gly residues; sequence GNTGGSGSGG. Residues 420 to 429 show a composition bias toward low complexity; sequence SNNNQSGTNT. 5 LysM domains span residues 429-472, 497-540, 565-608, 631-674, and 693-736; these read TYYT…KLIV, TYYT…KIIV, TSYT…TIIV, and KRHT…TLKV.

Belongs to the glycosyl hydrolase 73 family.

The protein resides in the secreted. In terms of biological role, hydrolyzes the cell wall of E.faecalis and M.lysodeikticus. May play an important role in cell wall growth and cell separation. In Enterococcus faecalis (strain ATCC 700802 / V583), this protein is Autolysin.